Consider the following 153-residue polypeptide: Ribosome maturation factor RimP (153 aa).

It belongs to the RimP family.

The protein localises to the cytoplasm. Its function is as follows. Required for maturation of 30S ribosomal subunits. The protein is Ribosome maturation factor RimP of Clostridium tetani (strain Massachusetts / E88).